A 308-amino-acid polypeptide reads, in one-letter code: Ribosomal RNA small subunit methyltransferase H (308 aa).

Residues 32–34 (AGH), aspartate 51, phenylalanine 78, aspartate 99, and glutamine 106 each bind S-adenosyl-L-methionine.

It belongs to the methyltransferase superfamily. RsmH family.

The protein resides in the cytoplasm. The enzyme catalyses cytidine(1402) in 16S rRNA + S-adenosyl-L-methionine = N(4)-methylcytidine(1402) in 16S rRNA + S-adenosyl-L-homocysteine + H(+). In terms of biological role, specifically methylates the N4 position of cytidine in position 1402 (C1402) of 16S rRNA. This chain is Ribosomal RNA small subunit methyltransferase H, found in Mesoplasma florum (strain ATCC 33453 / NBRC 100688 / NCTC 11704 / L1) (Acholeplasma florum).